Reading from the N-terminus, the 122-residue chain is MSLTKEDIINAIAEMSVKDVVELISAMEEKFGVSAAAATVAVAAGPAAAVEEQTEFTVMLSSVGDKKVNVIKAVRELTGLGLKEAKDLVEAAPKAVKEGVSKADAEAAKAKLEEAGALVEVK.

The protein belongs to the bacterial ribosomal protein bL12 family. Homodimer. Part of the ribosomal stalk of the 50S ribosomal subunit. Forms a multimeric L10(L12)X complex, where L10 forms an elongated spine to which 2 to 4 L12 dimers bind in a sequential fashion. Binds GTP-bound translation factors.

Its function is as follows. Forms part of the ribosomal stalk which helps the ribosome interact with GTP-bound translation factors. Is thus essential for accurate translation. The sequence is that of Large ribosomal subunit protein bL12 from Cellvibrio japonicus (strain Ueda107) (Pseudomonas fluorescens subsp. cellulosa).